A 326-amino-acid polypeptide reads, in one-letter code: Deoxyuridine 5'-triphosphate nucleotidohydrolase (326 aa).

Substrate-binding positions include arginine 218–serine 220 and phenylalanine 321–glycine 322.

This sequence belongs to the dUTPase family. The cofactor is Mg(2+).

It catalyses the reaction dUTP + H2O = dUMP + diphosphate + H(+). Its function is as follows. Involved in nucleotide metabolism: produces dUMP, the immediate precursor of thymidine nucleotides and decreases the intracellular concentration of dUTP to avoid uracil incorporation into viral DNA. This Equus caballus (Horse) protein is Deoxyuridine 5'-triphosphate nucleotidohydrolase.